Consider the following 419-residue polypeptide: Tyrosine--tRNA ligase (419 aa).

Tyrosine 34 serves as a coordination point for L-tyrosine. Residues proline 39–histidine 48 carry the 'HIGH' region motif. Residues tyrosine 168 and glutamine 172 each coordinate L-tyrosine. The 'KMSKS' region motif lies at lysine 230–serine 234. Lysine 233 is an ATP binding site. The region spanning valine 352 to tyrosine 418 is the S4 RNA-binding domain.

The protein belongs to the class-I aminoacyl-tRNA synthetase family. TyrS type 1 subfamily. In terms of assembly, homodimer.

The protein localises to the cytoplasm. It carries out the reaction tRNA(Tyr) + L-tyrosine + ATP = L-tyrosyl-tRNA(Tyr) + AMP + diphosphate + H(+). In terms of biological role, catalyzes the attachment of tyrosine to tRNA(Tyr) in a two-step reaction: tyrosine is first activated by ATP to form Tyr-AMP and then transferred to the acceptor end of tRNA(Tyr). This Listeria innocua serovar 6a (strain ATCC BAA-680 / CLIP 11262) protein is Tyrosine--tRNA ligase.